Here is a 174-residue protein sequence, read N- to C-terminus: U1 small nuclear ribonucleoprotein C (174 aa).

A Matrin-type zinc finger spans residues 4-36 (YYCDYCDKYLTHDSPSVRKSHTVGKQHKLAVQL). 2 stretches are compositionally biased toward low complexity: residues 82-109 (QQQQ…QQGM) and 122-140 (PHQF…FQPP). Residues 82–174 (QQQQQQQQQQ…QHNQPTIPGL (93 aa)) form a disordered region. Over residues 141–163 (HHQHHPHQQHQQHQQHQHQHQHQ) the composition is skewed to basic residues. Residues 164-174 (QQHNQPTIPGL) are compositionally biased toward low complexity.

Belongs to the U1 small nuclear ribonucleoprotein C family. As to quaternary structure, component of the U1 snRNP. The U1 snRNP is composed of the U1 snRNA and the 7 core Sm proteins SNRPB, SNRPD1, SNRPD2, SNRPD3, SNRPE, SNRPF and SNRPG that assemble in a heptameric protein ring on the Sm site of the small nuclear RNA to form the core snRNP, and at least 3 U1 snRNP-specific proteins SNRNP70/U1-70K, SNRPA/U1-A and SNRPC/U1-C. SNRPC/U1-C interacts with U1 snRNA and the 5' splice-site region of the pre-mRNA.

The protein localises to the nucleus. Functionally, component of the spliceosomal U1 snRNP, which is essential for recognition of the pre-mRNA 5' splice-site and the subsequent assembly of the spliceosome. SNRPC/U1-C is directly involved in initial 5' splice-site recognition for both constitutive and regulated alternative splicing. The interaction with the 5' splice-site seems to precede base-pairing between the pre-mRNA and the U1 snRNA. Stimulates commitment or early (E) complex formation by stabilizing the base pairing of the 5' end of the U1 snRNA and the 5' splice-site region. This chain is U1 small nuclear ribonucleoprotein C, found in Dictyostelium discoideum (Social amoeba).